Consider the following 296-residue polypeptide: Urease accessory protein UreD (296 aa).

The protein belongs to the UreD family. UreD, UreF and UreG form a complex that acts as a GTP-hydrolysis-dependent molecular chaperone, activating the urease apoprotein by helping to assemble the nickel containing metallocenter of UreC. The UreE protein probably delivers the nickel.

It localises to the cytoplasm. Functionally, required for maturation of urease via the functional incorporation of the urease nickel metallocenter. The protein is Urease accessory protein UreD of Janthinobacterium sp. (strain Marseille) (Minibacterium massiliensis).